An 86-amino-acid chain; its full sequence is Large ribosomal subunit protein bL31B (86 aa).

It belongs to the bacterial ribosomal protein bL31 family. Type B subfamily. In terms of assembly, part of the 50S ribosomal subunit.

This Saccharopolyspora erythraea (strain ATCC 11635 / DSM 40517 / JCM 4748 / NBRC 13426 / NCIMB 8594 / NRRL 2338) protein is Large ribosomal subunit protein bL31B.